The primary structure comprises 85 residues: UPF0291 protein str0508 (85 aa).

Residues 62 to 85 (TPEKLRQVQREKGLHGRSLDDPES) are disordered.

The protein belongs to the UPF0291 family.

It localises to the cytoplasm. The chain is UPF0291 protein str0508 from Streptococcus thermophilus (strain CNRZ 1066).